The primary structure comprises 405 residues: Argininosuccinate synthase (405 aa).

ATP contacts are provided by residues Ala-10 to Ser-18 and Ala-37. L-citrulline is bound by residues Tyr-88 and Ser-93. Gly-118 contacts ATP. Thr-120, Asn-124, and Asp-125 together coordinate L-aspartate. Asn-124 is an L-citrulline binding site. L-citrulline-binding residues include Arg-128, Ser-179, Ser-188, Glu-264, and Tyr-276.

This sequence belongs to the argininosuccinate synthase family. Type 1 subfamily. As to quaternary structure, homotetramer.

The protein localises to the cytoplasm. It carries out the reaction L-citrulline + L-aspartate + ATP = 2-(N(omega)-L-arginino)succinate + AMP + diphosphate + H(+). It functions in the pathway amino-acid biosynthesis; L-arginine biosynthesis; L-arginine from L-ornithine and carbamoyl phosphate: step 2/3. In Pseudomonas entomophila (strain L48), this protein is Argininosuccinate synthase.